The sequence spans 145 residues: Ribosomal protein uL24-like (145 aa).

2 disordered regions span residues 1 to 21 and 122 to 145; these read MKFN…HFNA and KAKS…KMQE. Glycyl lysine isopeptide (Lys-Gly) (interchain with G-Cter in SUMO2) cross-links involve residues K136 and K142.

The protein belongs to the universal ribosomal protein uL24 family.

In Homo sapiens (Human), this protein is Ribosomal protein uL24-like (RPL26L1).